We begin with the raw amino-acid sequence, 470 residues long: Nuclear segregation protein BFR1 (470 aa).

Coiled-coil stretches lie at residues 17–178 and 237–281; these read DKKL…NGLN and NEFK…THAK. The residue at position 260 (serine 260) is a Phosphoserine. At threonine 336 the chain carries Phosphothreonine. The disordered stretch occupies residues 346-368; that stretch reads APSKSKKYKKKNQQKNTENEQPA. Over residues 349 to 358 the composition is skewed to basic residues; sequence KSKKYKKKNQ. At serine 369 the chain carries Phosphoserine. Residues 398–469 are a coiled coil; that stretch reads NSDDVKITVE…EQEESEKDKE (72 aa). The interval 447 to 470 is disordered; that stretch reads QQVKKELEEKRLKEQEESEKDKEN.

Functionally, implicated in secretion, nuclear segregation and in maintenance of cell size. The chain is Nuclear segregation protein BFR1 (BFR1) from Saccharomyces cerevisiae (strain ATCC 204508 / S288c) (Baker's yeast).